The primary structure comprises 448 residues: Tapasin (448 aa).

The signal sequence occupies residues 1-20; sequence MKSLSLLLAVALGLATAVSA. Residues 21–414 are Lumenal-facing; that stretch reads GPAVIECWFV…LSGPSLEDSV (394 aa). An intrachain disulfide couples Cys-27 to Cys-91. Asn-253 is a glycosylation site (N-linked (GlcNAc...) asparagine). The Ig-like C1-type domain occupies 292 to 399; the sequence is PKVSLMPATL…PASGRSAEVT (108 aa). A disulfide bridge connects residues Cys-315 and Cys-382. Residues 415-435 form a helical membrane-spanning segment; it reads GLFLSAFLLLGLFKALGWAAV. At 436 to 448 the chain is on the cytoplasmic side; that stretch reads YLSTCKDSKKKAE.

As to quaternary structure, heterodimer with PDIA3; disulfide-linked. Obligatory mediator for the interaction between newly assembled MHC class I molecules, calreticulin, PDIA3 and TAP. Up to 4 MHC class I/tapasin complexes bind to 1 TAP. Interacts with HLA-G-B2M complex; this interaction is required for loading of high affinity peptides. On its own or as part of MHC class I peptide loading complex, interacts with ligand-free MR1 or MR1-B2M complex, providing for stable MR1 pools ready for metabolite antigen processing. In terms of tissue distribution, neutrophils, mostly in fully differentiated cells.

It is found in the endoplasmic reticulum membrane. Functionally, involved in the association of MHC class I with transporter associated with antigen processing (TAP) and in the assembly of MHC class I with peptide (peptide loading). In Homo sapiens (Human), this protein is Tapasin.